The sequence spans 388 residues: Ras-related protein Rab-26 (388 aa).

Residues 1–115 are disordered; that stretch reads MASTAVGLGG…HHHSQLSLTG (115 aa). A compositionally biased stretch (gly residues) spans 7 to 21; it reads GLGGGEGDPGAGGPP. Residues 47–56 show a composition bias toward basic and acidic residues; the sequence is RIEELRRRPF. A compositionally biased stretch (low complexity) spans 67 to 86; the sequence is PASVSASITTTTTQQQQQHH. Over residues 87-109 the composition is skewed to basic residues; that stretch reads NPSHHHQSSHHQPSHHHHHHHHS. 197–204 provides a ligand contact to GTP; it reads GDSGVGKT. Residues 219-228 carry the Effector region motif; that stretch reads SFSATVGIAL. GTP is bound by residues 246 to 250 and 304 to 307; these read DTAGQ and NKAD. Cys-382 carries the S-palmitoyl cysteine lipid modification. Residue Cys-385 is modified to Cysteine methyl ester. Residue Cys-385 is the site of S-geranylgeranyl cysteine attachment. The propeptide at 386-388 is removed in mature form; that stretch reads RNM.

Belongs to the small GTPase superfamily. Rab family.

It localises to the cell membrane. In terms of biological role, participates in exocrine secretion. This Drosophila melanogaster (Fruit fly) protein is Ras-related protein Rab-26.